The chain runs to 580 residues: Zinc finger CCCH domain-containing protein 47 (580 aa).

ANK repeat units lie at residues 72–102 (EERTPLMVAAMYGSIKVLTFIVSTGKSDVNR) and 107–139 (ERVTPLHCAVAGCSVNMIEVINVLLDASALVNS). 2 C3H1-type zinc fingers span residues 251–278 (PYTCVPCPEFRKGSCPKGDSCEYAHGVF) and 286–310 (QYKTRLCKDETGCARKVCFFAHKRE). Positions 421 to 451 (YVSSPSRNSQMGQNMNQHYPSSPVRQPPSQH) are disordered.

Expressed in roots and anthers.

The protein localises to the nucleus. Involved in salt stress response. May positively modulate plant tolerance to salt stress. The polypeptide is Zinc finger CCCH domain-containing protein 47 (Arabidopsis thaliana (Mouse-ear cress)).